Here is a 161-residue protein sequence, read N- to C-terminus: Peroxynitrite isomerase 1 (161 aa).

Residues 17–23 carry the GXWXGXG motif; sequence GTWTGRG. His152 contacts heme b.

This sequence belongs to the nitrobindin family. In terms of assembly, homodimer. Heme b serves as cofactor.

The enzyme catalyses peroxynitrite = nitrate. It functions in the pathway nitrogen metabolism. Functionally, heme-binding protein able to scavenge peroxynitrite and to protect free L-tyrosine against peroxynitrite-mediated nitration, by acting as a peroxynitrite isomerase that converts peroxynitrite to nitrate. Therefore, this protein likely plays a role in peroxynitrite sensing and in the detoxification of reactive nitrogen and oxygen species (RNS and ROS, respectively). Is able to bind nitric oxide (NO) in vitro, but may act as a sensor of peroxynitrite levels in vivo. The protein is Peroxynitrite isomerase 1 of Mycolicibacterium paratuberculosis (strain ATCC BAA-968 / K-10) (Mycobacterium paratuberculosis).